Reading from the N-terminus, the 345-residue chain is 1-aminocyclopropane-1-carboxylate oxidase homolog 7 (345 aa).

K16 participates in a covalent cross-link: Glycyl lysine isopeptide (Lys-Gly) (interchain with G-Cter in ubiquitin). Residues 194–293 (KGLHMICHYY…RISIACFFSS (100 aa)) form the Fe2OG dioxygenase domain. Residues H218, D220, and H274 each contribute to the Fe cation site. R284 provides a ligand contact to 2-oxoglutarate.

The protein belongs to the iron/ascorbate-dependent oxidoreductase family. Fe(2+) serves as cofactor.

The protein is 1-aminocyclopropane-1-carboxylate oxidase homolog 7 of Arabidopsis thaliana (Mouse-ear cress).